The chain runs to 183 residues: Apo-citrate lyase phosphoribosyl-dephospho-CoA transferase (183 aa).

The protein belongs to the CitX family.

The enzyme catalyses apo-[citrate lyase ACP] + 2'-(5''-triphospho-alpha-D-ribosyl)-3'-dephospho-CoA = holo-[citrate lyase ACP] + diphosphate. Functionally, transfers 2-(5''-triphosphoribosyl)-3'-dephosphocoenzyme-A on a serine residue to the apo-acyl carrier protein (gamma chain) of the citrate lyase to yield holo-acyl carrier protein. The sequence is that of Apo-citrate lyase phosphoribosyl-dephospho-CoA transferase from Citrobacter koseri (strain ATCC BAA-895 / CDC 4225-83 / SGSC4696).